The following is a 178-amino-acid chain: Large ribosomal subunit protein uL6 (178 aa).

It belongs to the universal ribosomal protein uL6 family. Part of the 50S ribosomal subunit.

Functionally, this protein binds to the 23S rRNA, and is important in its secondary structure. It is located near the subunit interface in the base of the L7/L12 stalk, and near the tRNA binding site of the peptidyltransferase center. The sequence is that of Large ribosomal subunit protein uL6 from Leuconostoc mesenteroides subsp. mesenteroides (strain ATCC 8293 / DSM 20343 / BCRC 11652 / CCM 1803 / JCM 6124 / NCDO 523 / NBRC 100496 / NCIMB 8023 / NCTC 12954 / NRRL B-1118 / 37Y).